Here is a 519-residue protein sequence, read N- to C-terminus: Membrane protein insertase YidC (519 aa).

Transmembrane regions (helical) follow at residues 6-26 (ILFVTLSAFTVFIWYFFFAQP), 298-318 (VDFGFFGFLGKIAFSILVFFY), 324-344 (YGWAIIMLTTIIQILVLPLTL), 390-410 (LGGCLPMLLQLPIFWAFFTML), 434-454 (FMQFGSFNLNLLPLMMGIGMF), and 471-491 (IMYIMPVIFTFMFWSFPSGLV).

Belongs to the OXA1/ALB3/YidC family. Type 1 subfamily. Interacts with the Sec translocase complex via SecD. Specifically interacts with transmembrane segments of nascent integral membrane proteins during membrane integration.

The protein localises to the cell inner membrane. In terms of biological role, required for the insertion and/or proper folding and/or complex formation of integral membrane proteins into the membrane. Involved in integration of membrane proteins that insert both dependently and independently of the Sec translocase complex, as well as at least some lipoproteins. Aids folding of multispanning membrane proteins. The protein is Membrane protein insertase YidC of Endomicrobium trichonymphae.